A 711-amino-acid polypeptide reads, in one-letter code: Putative membrane protein IgaA homolog (711 aa).

A topological domain (periplasmic) is located at residue M1. Residues 2-22 (STIVIFLAALLACSLLAGWLI) traverse the membrane as a helical segment. Topologically, residues 23–204 (KVRSRRRQLP…YALSRPRGLR (182 aa)) are cytoplasmic. Transmembrane regions (helical) follow at residues 205 to 225 (EALL…TPDV) and 226 to 246 (FVPW…WGLF). Over 247-339 (APPAKSSLRE…KNFPLQHWLR (93 aa)) the chain is Cytoplasmic. Residues 340–360 (STIIAAGSLLVLFMLLFWIPL) traverse the membrane as a helical segment. Topologically, residues 361–655 (DMPLKFTLSW…IPDRSGLWRY (295 aa)) are periplasmic. The chain crosses the membrane as a helical span at residues 656 to 676 (LSTTLLLLTMLGSAIYNGVQA). Over 677–711 (WRRYQRHRTRMMKIQAYYESCLNPQLITPSESLIE) the chain is Cytoplasmic.

Belongs to the IgaA family.

It is found in the cell inner membrane. This chain is Putative membrane protein IgaA homolog (yrfF), found in Escherichia coli O157:H7.